Here is a 313-residue protein sequence, read N- to C-terminus: tRNA dimethylallyltransferase (313 aa).

11 to 18 (GPTASGKT) is a binding site for ATP. Residue 13 to 18 (TASGKT) coordinates substrate. Interaction with substrate tRNA stretches follow at residues 36-39 (DSAL), 160-164 (QRINR), and 241-246 (RCVGYR).

Belongs to the IPP transferase family. In terms of assembly, monomer. The cofactor is Mg(2+).

The enzyme catalyses adenosine(37) in tRNA + dimethylallyl diphosphate = N(6)-dimethylallyladenosine(37) in tRNA + diphosphate. Its function is as follows. Catalyzes the transfer of a dimethylallyl group onto the adenine at position 37 in tRNAs that read codons beginning with uridine, leading to the formation of N6-(dimethylallyl)adenosine (i(6)A). The chain is tRNA dimethylallyltransferase from Haemophilus ducreyi (strain 35000HP / ATCC 700724).